We begin with the raw amino-acid sequence, 1102 residues long: Voltage-gated delayed rectifier potassium channel KCNH8 (1102 aa).

At 1 to 225 (MPVMKGLLAP…HFSTFKAGWD (225 aa)) the chain is on the cytoplasmic side. Residues 18–90 (IATRFDGTHS…LQIEKSLEEK (73 aa)) form the PAS domain. The region spanning 93–145 (FKGEIMFYKKNGAPFWCLLDIVPIKNEKGDVVLFLASFKDITDTKVKITSEDK) is the PAC domain. A helical transmembrane segment spans residues 226-246 (WLILLATFYVAVTVPYNVCFI). The Extracellular segment spans residues 247–255 (GNEDLSTTR). The helical transmembrane segment at 256–276 (STTVSDIAVEILFIIDIILNF) threads the bilayer. Over 277-298 (RTTYVSKSGQVIFEARSICIHY) the chain is Cytoplasmic. A helical membrane pass occupies residues 299-319 (VTTWFIIDLIAALPFDLLYAF). Residue N320 is glycosylated (N-linked (GlcNAc...) asparagine). The Extracellular segment spans residues 320-327 (NVTVVSLV). The chain crosses the membrane as a helical; Voltage-sensor span at residues 328 to 348 (HLLKTVRLLRLLRLLQKLDRY). Residues 349 to 353 (SQHST) are Cytoplasmic-facing. Residues 354–374 (IVLTLLMSMFALLAHWMACIW) traverse the membrane as a helical segment. The Extracellular portion of the chain corresponds to 375 to 419 (YVIGKMEREDNSLLKWEVGWLHELGKRLESPYYGNNTLGGPSIRS). N-linked (GlcNAc...) asparagine glycosylation occurs at N409. Residues 420 to 440 (AYIAALYFTLSSLTSVGFGNV) constitute an intramembrane region (pore-forming). A Selectivity filter motif is present at residues 434 to 439 (SVGFGN). Residues 441–448 (SANTDAEK) lie on the Extracellular side of the membrane. Residues 449–469 (IFSICTMLIGALMHALVFGNV) traverse the membrane as a helical segment. Residues 470-1102 (TAIIQRMYSR…DVKDSKAINV (633 aa)) are Cytoplasmic-facing. Residues 551-668 (LFECASRGCL…HKFVEDIQHD (118 aa)) form a cNMP-binding domain region. Disordered stretches follow at residues 683 to 744 (SRLS…KTGS), 762 to 793 (PFHS…KEKN), 818 to 845 (EDGN…ISPS), and 960 to 983 (LVGS…LHHS). The span at 710–723 (VEDEEEEEVEEEET) shows a compositional bias: acidic residues. The span at 777–793 (TKQEADPPNHGTRKEKN) shows a compositional bias: basic and acidic residues. Over residues 968–982 (TEAHEQSPVDSELHH) the composition is skewed to basic and acidic residues.

Belongs to the potassium channel family. H (Eag) (TC 1.A.1.20) subfamily. Kv12.1/KCNH8 sub-subfamily. As to quaternary structure, the potassium channel is probably composed of a homo- or heterotetrameric complex of pore-forming alpha subunits that can associate with modulating beta subunits. In terms of tissue distribution, detected in superior cervical, mesenteric and coeliac ganglia. Expressed in brain (piriform cortex, olfactory tubercle, cerebral cortex, hippocampus pyramidial cells and dentate gyrus and basal ganglia of caudate/putamen and accumbens nucleus). Expressed in pituitary.

Its subcellular location is the membrane. It catalyses the reaction K(+)(in) = K(+)(out). Pore-forming (alpha) subunit of a voltage-gated delayed rectifier potassium channel that mediates outward-rectifying potassium currents. Elicits a slowly activating, non-inactivating and slowly deactivation outwards potassium current at depolarizating voltages from -30 mV to +50mV. Shows no obvious change in the activation rate from different holding potentials. Activation is strongly dependent on the pH of the external solution. The sequence is that of Voltage-gated delayed rectifier potassium channel KCNH8 from Rattus norvegicus (Rat).